We begin with the raw amino-acid sequence, 577 residues long: Arginine--tRNA ligase (577 aa).

The 'HIGH' region motif lies at 122-132 (PNVAKEMHVGH).

Belongs to the class-I aminoacyl-tRNA synthetase family. Monomer.

It is found in the cytoplasm. The enzyme catalyses tRNA(Arg) + L-arginine + ATP = L-arginyl-tRNA(Arg) + AMP + diphosphate. The sequence is that of Arginine--tRNA ligase from Salmonella agona (strain SL483).